The following is a 460-amino-acid chain: Glycogen synthase (460 aa).

Residue K15 coordinates ADP-alpha-D-glucose.

It belongs to the glycosyltransferase 1 family. Bacterial/plant glycogen synthase subfamily.

It carries out the reaction [(1-&gt;4)-alpha-D-glucosyl](n) + ADP-alpha-D-glucose = [(1-&gt;4)-alpha-D-glucosyl](n+1) + ADP + H(+). It participates in glycan biosynthesis; glycogen biosynthesis. In terms of biological role, synthesizes alpha-1,4-glucan chains using ADP-glucose. The sequence is that of Glycogen synthase from Trichodesmium erythraeum (strain IMS101).